Here is a 181-residue protein sequence, read N- to C-terminus: MILKDSTINNYATALFNIAVKEKLVDDYIIQVDALIQSLSDKDDFNKLVSFSNKQEKQDAILIIEKTFAPFEFDIYLINALKILVENQLFINTRMILKALYKKLLDYKNIVLGVVYSTEKLTKTQLSAIKKKISNKVNKKVELVNKIDPTLIGGIKVNVQGKVFDGSIKAKLEALKKQMNT.

It belongs to the ATPase delta chain family. F-type ATPases have 2 components, F(1) - the catalytic core - and F(0) - the membrane proton channel. F(1) has five subunits: alpha(3), beta(3), gamma(1), delta(1), epsilon(1). F(0) has three main subunits: a(1), b(2) and c(10-14). The alpha and beta chains form an alternating ring which encloses part of the gamma chain. F(1) is attached to F(0) by a central stalk formed by the gamma and epsilon chains, while a peripheral stalk is formed by the delta and b chains.

Its subcellular location is the cell membrane. Its function is as follows. F(1)F(0) ATP synthase produces ATP from ADP in the presence of a proton or sodium gradient. F-type ATPases consist of two structural domains, F(1) containing the extramembraneous catalytic core and F(0) containing the membrane proton channel, linked together by a central stalk and a peripheral stalk. During catalysis, ATP synthesis in the catalytic domain of F(1) is coupled via a rotary mechanism of the central stalk subunits to proton translocation. This protein is part of the stalk that links CF(0) to CF(1). It either transmits conformational changes from CF(0) to CF(1) or is implicated in proton conduction. The polypeptide is ATP synthase subunit delta (Mycoplasma capricolum subsp. capricolum (strain California kid / ATCC 27343 / NCTC 10154)).